We begin with the raw amino-acid sequence, 112 residues long: Ig kappa chain V-III region PC 7132 (112 aa).

The segment at 1–23 (DIVLTQSPASLAVSLGQRATISC) is framework-1. Residues Cys-23 and Cys-92 are joined by a disulfide bond. Residues 24–38 (RASESVDNYGISFMN) form a complementarity-determining-1 region. Residues 39–53 (WFQQKPGQPPKLLIY) are framework-2. Residues 54-60 (AASNQGS) form a complementarity-determining-2 region. Residues 61–92 (GVPARFSGSGSGTDFSLNIHPMEEDDTAMYFC) are framework-3. Residues 93–102 (QQSKEVPPYT) form a complementarity-determining-3 region. Residues 103–112 (FGGGTKLEIK) form a framework-4 region.

The sequence is that of Ig kappa chain V-III region PC 7132 from Mus musculus (Mouse).